The primary structure comprises 767 residues: Transducin-like enhancer protein 2 (767 aa).

Residues 1–152 are q domain; that stretch reads MYPQGRHPTP…SLLGQQNQLQ (152 aa). Residues 153–215 are GP domain; it reads PLSHAPPVPL…SRVDRAASRS (63 aa). The span at 198 to 212 shows a compositional bias: basic and acidic residues; it reads RVGVDAEGSRVDRAA. 3 disordered regions span residues 198-257, 264-283, and 296-346; these read RVGV…EEDK, VDED…CGKA, and SPAS…SSAS. The segment at 216–279 is ccN domain; it reads SSPSPPESLV…SEPPSPVTTP (64 aa). Residues 238 to 242 carry the Nuclear localization signal motif; sequence KQQRA. Ser253 bears the Phosphoserine; by CK2 mark. Ser274 is subject to Phosphoserine; by CDK1. Thr278 carries the phosphothreonine; by CDK1 modification. The tract at residues 280-447 is SP domain; the sequence is CGKAPLCIPA…VAKPAYSFHV (168 aa). A compositionally biased stretch (low complexity) spans 296–309; it reads SPASLASSLGSPLP. Position 306 is a phosphoserine (Ser306). A compositionally biased stretch (polar residues) spans 323-346; it reads TPASRSCGTSPPQDSSTPGPSSAS. WD repeat units follow at residues 479–517, 525–564, 569–608, 611–650, 693–732, and 734–766; these read AHGE…SKTP, NRDN…PRIK, SSAP…MVRQ, GHTD…QLQQ, LHES…SIFQ, and KESS…YEVV.

It belongs to the WD repeat Groucho/TLE family. As to quaternary structure, homooligomer and heterooligomer with other family members. Binds LEF1, TCF7, TCF7L1, TCF7L2, UTY, HES1 and HES5. Post-translationally, ubiquitinated by XIAP/BIRC4. In terms of tissue distribution, expressed in bone marrow-derived macrophages.

It localises to the nucleus. Transcriptional corepressor that binds to a number of transcription factors. Inhibits the transcriptional activation mediated by CTNNB1 and TCF family members in Wnt signaling. The effects of full-length TLE family members may be modulated by association with dominant-negative AES. The polypeptide is Transducin-like enhancer protein 2 (Tle2) (Mus musculus (Mouse)).